Consider the following 183-residue polypeptide: Ribosome rescue factor SmrB (183 aa).

The 76-residue stretch at 98–173 (LDLHGLTQKQ…GDAALLVLIE (76 aa)) folds into the Smr domain.

The protein belongs to the SmrB family. Associates with collided ribosomes, but not with correctly translating polysomes.

Its function is as follows. Acts as a ribosome collision sensor. Detects stalled/collided disomes (pairs of ribosomes where the leading ribosome is stalled and a second ribosome has collided with it) and endonucleolytically cleaves mRNA at the 5' boundary of the stalled ribosome. Stalled/collided disomes form a new interface (primarily via the 30S subunits) that binds SmrB. Cleaved mRNA becomes available for tmRNA ligation, leading to ribosomal subunit dissociation and rescue of stalled ribosomes. The chain is Ribosome rescue factor SmrB from Erwinia tasmaniensis (strain DSM 17950 / CFBP 7177 / CIP 109463 / NCPPB 4357 / Et1/99).